We begin with the raw amino-acid sequence, 435 residues long: 5-methylthioadenosine/S-adenosylhomocysteine deaminase (435 aa).

Positions 65 and 67 each coordinate Zn(2+). E94, R150, and H189 together coordinate substrate. H216 is a Zn(2+) binding site. E219 and D304 together coordinate substrate. D304 is a Zn(2+) binding site.

Belongs to the metallo-dependent hydrolases superfamily. MTA/SAH deaminase family. Zn(2+) is required as a cofactor.

The catalysed reaction is S-adenosyl-L-homocysteine + H2O + H(+) = S-inosyl-L-homocysteine + NH4(+). The enzyme catalyses S-methyl-5'-thioadenosine + H2O + H(+) = S-methyl-5'-thioinosine + NH4(+). In terms of biological role, catalyzes the deamination of 5-methylthioadenosine and S-adenosyl-L-homocysteine into 5-methylthioinosine and S-inosyl-L-homocysteine, respectively. Is also able to deaminate adenosine. This Bacillus cereus (strain G9842) protein is 5-methylthioadenosine/S-adenosylhomocysteine deaminase.